A 182-amino-acid chain; its full sequence is ADP-ribosylation factor-like protein 3 (182 aa).

Residue Gly-2 is the site of N-myristoyl glycine attachment. Ser-5 bears the Phosphoserine mark. GTP-binding positions include 24–31 (GLDNAGKT), Thr-48, 67–71 (DIGGQ), Gly-70, 126–129 (NKQD), and 159–161 (SAL). Thr-31 and Thr-48 together coordinate Mg(2+).

The protein belongs to the small GTPase superfamily. Arf family. As to quaternary structure, found in a complex with ARL3, RP2 and UNC119 (or UNC119B); RP2 induces hydrolysis of GTP ARL3 in the complex, leading to the release of UNC119 (or UNC119B). Interacts with RP2; interaction is direct and stimulated with the activated GTP-bound form of ARL3. Interacts with SYS1. Interacts with ARL2BP; the GTP-bound form interacts with ARL2BP. Microtubule-associated protein. Does not interact with TBCC. Interacts with RP2. Interacts with PDE6D; the interaction occurs specifically with the GTP-bound form of ARL3. Interacts with GGA1; the interaction recruits PKD1:PKD2 complex to trans-Golgi network and is required for ciliary targeting of PKD1:PKD2 complex. Interacts with DNAAF9.

The protein resides in the golgi apparatus membrane. The protein localises to the cytoplasm. Its subcellular location is the cytoskeleton. It is found in the spindle. It localises to the nucleus. The protein resides in the microtubule organizing center. The protein localises to the centrosome. Its subcellular location is the cell projection. It is found in the cilium. Its function is as follows. Small GTP-binding protein which cycles between an inactive GDP-bound and an active GTP-bound form, and the rate of cycling is regulated by guanine nucleotide exchange factors (GEF) and GTPase-activating proteins (GAP). Required for normal cytokinesis and cilia signaling. Required for targeting proteins to the cilium, including myristoylated NPHP3 and prenylated INPP5E. Targets NPHP3 to the ciliary membrane by releasing myristoylated NPHP3 from UNC119B cargo adapter into the cilium. Requires assistance from GTPase-activating proteins (GAPs) like RP2 and PDE6D, in order to cycle between inactive GDP-bound and active GTP-bound forms. Required for PKD1:PKD2 complex targeting from the trans-Golgi network to the cilium. This is ADP-ribosylation factor-like protein 3 from Mus musculus (Mouse).